The primary structure comprises 482 residues: Glucose starvation modulator protein 1 (482 aa).

Residues 20–48 (CVFCHEKHLQCDVGRPCQNCEKRNIGESC) constitute a DNA-binding region (zn(2)-C6 fungal-type). Positions 350 to 422 (LLEYENMSKM…KLFNEYLAFS (73 aa)) constitute a PAS domain.

Belongs to the ERT1/acuK family.

The protein resides in the nucleus. Its function is as follows. Transcription factor which regulates nonfermentable carbon utilization. This chain is Glucose starvation modulator protein 1 (GSM1), found in Eremothecium gossypii (strain ATCC 10895 / CBS 109.51 / FGSC 9923 / NRRL Y-1056) (Yeast).